A 231-amino-acid polypeptide reads, in one-letter code: 2-C-methyl-D-erythritol 4-phosphate cytidylyltransferase (231 aa).

It belongs to the IspD/TarI cytidylyltransferase family. IspD subfamily.

It carries out the reaction 2-C-methyl-D-erythritol 4-phosphate + CTP + H(+) = 4-CDP-2-C-methyl-D-erythritol + diphosphate. It functions in the pathway isoprenoid biosynthesis; isopentenyl diphosphate biosynthesis via DXP pathway; isopentenyl diphosphate from 1-deoxy-D-xylulose 5-phosphate: step 2/6. Catalyzes the formation of 4-diphosphocytidyl-2-C-methyl-D-erythritol from CTP and 2-C-methyl-D-erythritol 4-phosphate (MEP). The chain is 2-C-methyl-D-erythritol 4-phosphate cytidylyltransferase from Fusobacterium nucleatum subsp. nucleatum (strain ATCC 25586 / DSM 15643 / BCRC 10681 / CIP 101130 / JCM 8532 / KCTC 2640 / LMG 13131 / VPI 4355).